Reading from the N-terminus, the 410-residue chain is Multidrug resistance protein MdtA (410 aa).

The first 21 residues, 1 to 21 (MNNRYPVMKKGLIVLVVIAVA), serve as a signal peptide directing secretion. The interval 36-56 (SDGDLSGQSAHGKRGNGAHKP) is disordered.

The protein belongs to the membrane fusion protein (MFP) (TC 8.A.1) family. In terms of assembly, part of a tripartite efflux system composed of MdtA, MdtB and MdtC.

The protein resides in the cell inner membrane. This is Multidrug resistance protein MdtA from Pantoea ananatis (strain AJ13355).